Consider the following 257-residue polypeptide: Imidazole glycerol phosphate synthase subunit HisF (257 aa).

Catalysis depends on residues Asp11 and Asp130.

Belongs to the HisA/HisF family. In terms of assembly, heterodimer of HisH and HisF.

It is found in the cytoplasm. It catalyses the reaction 5-[(5-phospho-1-deoxy-D-ribulos-1-ylimino)methylamino]-1-(5-phospho-beta-D-ribosyl)imidazole-4-carboxamide + L-glutamine = D-erythro-1-(imidazol-4-yl)glycerol 3-phosphate + 5-amino-1-(5-phospho-beta-D-ribosyl)imidazole-4-carboxamide + L-glutamate + H(+). It functions in the pathway amino-acid biosynthesis; L-histidine biosynthesis; L-histidine from 5-phospho-alpha-D-ribose 1-diphosphate: step 5/9. In terms of biological role, IGPS catalyzes the conversion of PRFAR and glutamine to IGP, AICAR and glutamate. The HisF subunit catalyzes the cyclization activity that produces IGP and AICAR from PRFAR using the ammonia provided by the HisH subunit. This chain is Imidazole glycerol phosphate synthase subunit HisF, found in Mannheimia succiniciproducens (strain KCTC 0769BP / MBEL55E).